Here is a 144-residue protein sequence, read N- to C-terminus: Cystatin-F (144 aa).

An N-terminal signal peptide occupies residues 1–18 (MWLAILLALCCLTSDTHG). N-linked (GlcNAc...) asparagine glycosylation occurs at N61. The Secondary area of contact signature appears at 80–84 (QVVKG). 2 disulfide bridges follow: C98–C109 and C123–C143.

Belongs to the cystatin family.

It localises to the secreted. Inhibits papain and cathepsin L but with affinities lower than other cystatins. May play a role in immune regulation through inhibition of a unique target in the hematopoietic system. This Mus musculus (Mouse) protein is Cystatin-F (Cst7).